The primary structure comprises 354 residues: MTVLKNERYLKALLREPVDMTPVWMMRQAGRYLPEYKATRAKAGDFMSLCRNADLACEVTLQPLRRYDLDAAILFSDILTIPDAMGLGLSFGVGEGPKFARPVENKSAVQNLPIPDPEQELQYVMNAVRTIRRELKGEVPLIGFSGSPWTLATYMVEGGSSKAFTKIKKMMYSEPKILHLLLDKLADAVILYLNAQINAGVQAVMVFDTWGGVLGHREYLDFSLQYMHKIVDGLIRENDGYKVPVTLFTKGGGLWLEAMASTGCDALGLDWTVNLAEAKARVGHKVALQGNMDPSVLYASPARIEQEVQQILADFGQGSGHVFNLGHGIHQDVPEISPKVFVDAVHQYSVSYHQ.

Substrate contacts are provided by residues 27–31, aspartate 77, tyrosine 154, threonine 209, and histidine 327; that span reads RQAGR.

The protein belongs to the uroporphyrinogen decarboxylase family. As to quaternary structure, homodimer.

It is found in the cytoplasm. It carries out the reaction uroporphyrinogen III + 4 H(+) = coproporphyrinogen III + 4 CO2. The protein operates within porphyrin-containing compound metabolism; protoporphyrin-IX biosynthesis; coproporphyrinogen-III from 5-aminolevulinate: step 4/4. Catalyzes the decarboxylation of four acetate groups of uroporphyrinogen-III to yield coproporphyrinogen-III. This Histophilus somni (strain 129Pt) (Haemophilus somnus) protein is Uroporphyrinogen decarboxylase.